We begin with the raw amino-acid sequence, 485 residues long: Programmed cell death protein 7 (485 aa).

A disordered region spans residues 1–133 (MALPPFFGQG…EAPPPPADVL (133 aa)). Residues 12-48 (PGPPPPQPPPPAPFGCPPPPLPSPAFPPPLPQRPGPF) are compositionally biased toward pro residues. The segment covering 49–71 (PGASAPFLQPPLALQPRASAEAS) has biased composition (low complexity). 2 stretches are compositionally biased toward pro residues: residues 82–96 (PVPP…PQCR) and 109–130 (PPPP…PPPA). Coiled-coil stretches lie at residues 232–335 (VGEA…AAAR) and 362–411 (RSEL…ESKL).

As to quaternary structure, interacts with RBM40. Component of the U11/U12 snRNPs that are part of the U12-type spliceosome.

It is found in the nucleus. Functionally, promotes apoptosis when overexpressed. The chain is Programmed cell death protein 7 (PDCD7) from Homo sapiens (Human).